A 115-amino-acid polypeptide reads, in one-letter code: Histone H2A-Bbd type 1 (115 aa).

Residues 1–21 (MPRRRRRRGSSGAGGRGRTCS) are disordered. Positions 87-115 (LLDMVVHNDRLLSTLFNTTTISQVAPGED) are docking domain.

It belongs to the histone H2A family. In terms of assembly, the nucleosome is a histone octamer containing two molecules each of H2A, H2B, H3 and H4 assembled in one H3-H4 heterotetramer and two H2A-H2B heterodimers. May be incorporated into a proportion of nucleosomes, replacing one or more H2A molecules. As to expression, present in mature sperm.

It is found in the nucleus. Its subcellular location is the chromosome. Functionally, atypical histone H2A which can replace conventional H2A in some nucleosomes and is associated with active transcription and mRNA processing. Nucleosomes wrap and compact DNA into chromatin, limiting DNA accessibility to the cellular machineries which require DNA as a template. Histones thereby play a central role in transcription regulation, DNA repair, DNA replication and chromosomal stability. Nucleosomes containing this histone are less rigid and organize less DNA than canonical nucleosomes in vivo. They are enriched in actively transcribed genes and associate with the elongating form of RNA polymerase. They associate with spliceosome components and are required for mRNA splicing. In Homo sapiens (Human), this protein is Histone H2A-Bbd type 1.